We begin with the raw amino-acid sequence, 332 residues long: Aquaporin Lacbi1:317173 (332 aa).

The span at 1–20 (MSGQHQITEQSSRNPLSRVS) shows a compositional bias: polar residues. A disordered region spans residues 1 to 45 (MSGQHQITEQSSRNPLSRVSTLLPEKPLSPTSTYAGTQKHPEAPR). Residues 1 to 66 (MSGQHQITEQ…RNAIRKPMAE (66 aa)) lie on the Cytoplasmic side of the membrane. Residues 67-87 (FFGVALLIIFGAGSACQVVLS) traverse the membrane as a helical segment. Over 88 to 100 (TNPDVASSARGSF) the chain is Extracellular. A helical membrane pass occupies residues 101–121 (LSINFGWAIGIAMGVWVSGGI). At 122–144 (SGGHINPAITIAMATYRGFPWRK) the chain is on the cytoplasmic side. An NPA 1 motif is present at residues 127-129 (NPA). The chain crosses the membrane as a helical span at residues 145 to 165 (VPSYILAQVLGGVVGAGLVYA). Over 166-199 (NYIHAIDIFEGGHHIRTQATASLFATYALPYMTQ) the chain is Extracellular. The helical transmembrane segment at 200–220 (ASCFFSEFLATAVLSMMVFAL) threads the bilayer. Topologically, residues 221 to 230 (TDKRNHSPTN) are cytoplasmic. The helical transmembrane segment at 231–251 (GLLPFALFILFVGLGASLGME) threads the bilayer. The Extracellular portion of the chain corresponds to 252–283 (TAYALNPARDFGPRLFLAMAGYGKALFNYRSQ). Positions 257-259 (NPA) match the NPA 2 motif. A helical transmembrane segment spans residues 284–304 (YWLWAPIIAPVLGAQAGGLLY). Residues 305–332 (DTFLNDGDNSPIKWRCASSQEHQLAEVV) lie on the Cytoplasmic side of the membrane.

The protein belongs to the MIP/aquaporin (TC 1.A.8) family.

It is found in the membrane. The catalysed reaction is H2O(in) = H2O(out). It carries out the reaction NH4(+)(in) = NH4(+)(out). Water channel required to facilitate the transport of water across membranes. Acts as the most efficient Laccaria water channel. In addition to water, also shows strong ammonium transport activity. May be involved in fungal nitrogen (ammonium) support of the plant host in symbiosis. This chain is Aquaporin Lacbi1:317173, found in Laccaria bicolor (strain S238N-H82 / ATCC MYA-4686) (Bicoloured deceiver).